A 762-amino-acid chain; its full sequence is Cell surface protein (762 aa).

An N-terminal signal peptide occupies residues 1–26; the sequence is MKNLKKLIAVVSTFALVFSAMAVGFA. 3 SLH domains span residues 27–90, 92–155, and 156–204; these read ATTP…EMAK, EKSA…WPYG, and YLAK…KEVL. Residues tyrosine 297, tyrosine 516, tyrosine 520, and tyrosine 632 are each glycosylated (O-linked (Glc...) tyrosine).

Post-translationally, glycosylated; contains 8% carbohydrates, which correspond to about 40 to 50 sugar molecules per monomer. O-linked glycans consist of Glc, GalNAc and GlcNAc.

The protein localises to the secreted. Its subcellular location is the cell wall. The protein resides in the S-layer. In terms of biological role, the S-layer is a paracrystalline mono-layered assembly of proteins which coat the surface of bacteria. This Thermoanaerobacter kivui (Acetogenium kivui) protein is Cell surface protein.